Consider the following 1012-residue polypeptide: RAS protein activator like-3 (1012 aa).

Disordered regions lie at residues 1-128 (MDPP…TPDV), 147-196 (GNED…QIHN), and 208-229 (KKAKSELGASASRDGPPSALGS). Positions 7–21 (SRASQTQPVAPSPLT) are enriched in polar residues. Residue S18 is modified to Phosphoserine. The span at 27–39 (SGGGAEKGAGGFR) shows a compositional bias: gly residues. The span at 50-62 (QSHQETTASSQPA) shows a compositional bias: polar residues. S51 is subject to Phosphoserine. Acidic residues predominate over residues 100 to 113 (SEPEPENPEPEPEL). 4 positions are modified to phosphoserine: S160, S162, S163, and S166. Over residues 160–171 (SASSESSIHVAS) the composition is skewed to low complexity. Residues 175 to 186 (KDPDRTPGKTDP) show a composition bias toward basic and acidic residues. The region spanning 193–294 (QIHNVRGLLK…WIEDLRRHFQ (102 aa)) is the PH domain. S212, S225, S229, and S232 each carry phosphoserine. T235 carries the phosphothreonine modification. The region spanning 285–405 (WIEDLRRHFQ…APAAGLERWF (121 aa)) is the C2 domain. In terms of domain architecture, Ras-GAP spans 475-683 (GRAQALVTDL…PAMQHFLDQV (209 aa)). Residues 752 to 887 (PAPRTQGHSS…DKDQALGTHR (136 aa)) are disordered. Phosphoserine is present on residues S788 and S791. A compositionally biased stretch (basic residues) spans 826–841 (PARRRPSAGPRPRPKG). Residues 889 to 989 (VGKLAELQCE…KDTIQNLQLL (101 aa)) adopt a coiled-coil conformation. Residues 990 to 999 (PRTSESQSQP) are compositionally biased toward polar residues. A disordered region spans residues 990–1012 (PRTSESQSQPVPLKAPCINGDTT).

The protein localises to the cytoplasm. It localises to the cell cortex. Functionally, functions as a Ras GTPase-activating protein. Plays an important role in the expansion and functions of natural killer T (NKT) cells in the liver by negatively regulating RAS activity and the down-stream ERK signaling pathway. This is RAS protein activator like-3 (RASAL3) from Bos taurus (Bovine).